A 138-amino-acid polypeptide reads, in one-letter code: Nuclear membrane organization protein APQ12 (138 aa).

Residues 1–39 lie on the Cytoplasmic side of the membrane; sequence MDATQPQYELSVVTQCLKSAIDVIQWLIPTITKFSQSHP. A helical membrane pass occupies residues 40–58; it reads LVFQLLFIFFTFYVFYKLL. Topologically, residues 59-67 are perinuclear space; sequence MNFITLVKR. A helical transmembrane segment spans residues 68–84; the sequence is FLYLTLVVTCIGIYMRG. Topologically, residues 85–138 are cytoplasmic; it reads SQQFLTVDLLNFYNFVMSNRYYAFKIYTLFINALEREINTVYHLAQMKMEQLLK.

This sequence belongs to the APQ12 family.

The protein resides in the nucleus membrane. It is found in the endoplasmic reticulum membrane. Functionally, involved in the regulation of lipid homeostasis in the endoplasmic reticulum, thereby impacting nuclear pore complex biogenesis and localization, and nucleocytoplasmic mRNA transport. This Saccharomyces cerevisiae (strain ATCC 204508 / S288c) (Baker's yeast) protein is Nuclear membrane organization protein APQ12 (APQ12).